A 363-amino-acid chain; its full sequence is S-methylmethionine--homocysteine S-methyltransferase BHMT2 (363 aa).

One can recognise a Hcy-binding domain in the interval 11–305; it reads RGILERLESG…YHIRAIAEEL (295 aa). Zn(2+) contacts are provided by cysteine 208, cysteine 290, and cysteine 291. Serine 321 carries the post-translational modification Phosphoserine.

In terms of assembly, homotetramer. Zn(2+) is required as a cofactor.

It catalyses the reaction S-methyl-L-methionine + L-homocysteine = 2 L-methionine + H(+). Its pathway is amino-acid biosynthesis; L-methionine biosynthesis via de novo pathway; L-methionine from L-homocysteine (BhmT route): step 1/1. Its function is as follows. Involved in the regulation of homocysteine metabolism. Converts betaine and homocysteine to dimethylglycine and methionine, respectively. This reaction is also required for the irreversible oxidation of choline. The sequence is that of S-methylmethionine--homocysteine S-methyltransferase BHMT2 (BHMT2) from Pongo abelii (Sumatran orangutan).